Consider the following 152-residue polypeptide: Large ribosomal subunit protein bL9 (152 aa).

It belongs to the bacterial ribosomal protein bL9 family.

Its function is as follows. Binds to the 23S rRNA. In Synechococcus sp. (strain CC9902), this protein is Large ribosomal subunit protein bL9.